A 281-amino-acid polypeptide reads, in one-letter code: 3'-5' exonuclease Snipper (281 aa).

The segment at 19-52 (DGARPDPNNDPEESFNEDEVTEANSVPAKSKKSR) is disordered. The segment covering 27 to 39 (NDPEESFNEDEVT) has biased composition (acidic residues). The 199-residue stretch at 64–262 (YVIAVDFEAT…MCKMVRDGAL (199 aa)) folds into the Exonuclease domain. Mg(2+) contacts are provided by aspartate 69 and glutamate 71. Glutamate 71 serves as the catalytic Proton acceptor. Glutamate 71 and alanine 72 together coordinate AMP. Residue aspartate 183 participates in Mg(2+) binding. Histidine 240 serves as the catalytic Proton acceptor. Histidine 240 serves as a coordination point for AMP. Aspartate 245 is a binding site for Mg(2+).

It belongs to the ERI2 family. Mg(2+) is required as a cofactor.

Its subcellular location is the cytoplasm. The protein localises to the nucleus. The protein resides in the nucleolus. Functionally, a broad-specificity exonuclease, capable of degrading both structure-specific DNA and RNA targets without sequence specificity in vitro. Requires two to five unpaired nucleotides in the 3' region for efficient binding and nuclease activity. Binds with higher affinity to RNA and DNA stem-loop substrates compared to single-stranded substrate. Binds to the 3'-end of histone mRNAs and degrades them, suggesting that it might play a role in histone mRNA decay after replication. Can readily cleave the histone stem-loop RNA beyond the -12 (UUU) position in the loop to produce -14 and then -16 oligonucleotide fragments for both the stem-loop and the reverse stem-loop. Cleaves both the single-stranded 3' flank as well as the double-stranded stem portion of histone stem-loop RNA. Might affect histone mRNA 3' processing thereby regulating histone protein expression. Has an important role in development and tissue formation. Might have a role in 5.8S rRNA precursor processing. The protein is 3'-5' exonuclease Snipper of Drosophila melanogaster (Fruit fly).